A 159-amino-acid polypeptide reads, in one-letter code: Growth arrest and DNA damage-inducible protein GADD45 gamma (159 aa).

The interval Val-43–Cys-86 is homodimerization.

This sequence belongs to the GADD45 family. Undergoes concentration-dependent homodimerization, which is required for growth inhibititory activity and enhances interaction with PCNA. Interacts with GADD45GIP1. Interacts with PCNA.

Involved in the regulation of growth and apoptosis. Mediates activation of stress-responsive MTK1/MEKK4 MAPKKK. The polypeptide is Growth arrest and DNA damage-inducible protein GADD45 gamma (Gadd45g) (Mus musculus (Mouse)).